A 244-amino-acid chain; its full sequence is Phosphoadenosine 5'-phosphosulfate reductase (244 aa).

The active-site Nucleophile; cysteine thiosulfonate intermediate is the cysteine 239.

Belongs to the PAPS reductase family. CysH subfamily.

It localises to the cytoplasm. It catalyses the reaction [thioredoxin]-disulfide + sulfite + adenosine 3',5'-bisphosphate + 2 H(+) = [thioredoxin]-dithiol + 3'-phosphoadenylyl sulfate. It functions in the pathway sulfur metabolism; hydrogen sulfide biosynthesis; sulfite from sulfate: step 3/3. Functionally, catalyzes the formation of sulfite from phosphoadenosine 5'-phosphosulfate (PAPS) using thioredoxin as an electron donor. This chain is Phosphoadenosine 5'-phosphosulfate reductase, found in Shigella boydii serotype 4 (strain Sb227).